We begin with the raw amino-acid sequence, 470 residues long: Cytochrome P450 monooxygenase FUM2 (470 aa).

A heme-binding site is contributed by C414.

Belongs to the cytochrome P450 family. Heme serves as cofactor.

It functions in the pathway mycotoxin biosynthesis. Cytochrome P450 monooxygenase; part of the gene cluster that mediates the biosynthesis of fumonisins B1 (FB1), B2 (FB2), B3 (FB3), and B4 (FB4), which are carcinogenic mycotoxins. Within the pathway, FUM2 performs the C-10 hydroxylation present in FB2 and FB4 and which occurs early in the biosynthesis. The biosynthesis starts with the FUM1-catalyzed carbon chain assembly from one molecule of acetyl-CoA, eight molecules of malonyl-CoA, and two molecules of methionine (in S-adenosyl form). The C18 polyketide chain is released from the enzyme by a nucleophilic attack of a carbanion, which is derived from R-carbon of alanine by decarboxylation, on the carbonyl carbon of polyketide acyl chain. This step is catalyzed by the pyridoxal 5'-phosphate-dependent aminoacyl transferase FUM8. The resultant 3-keto intermediate is then stereospecifically reduced to a 3-hydroxyl product by reductase FUM13. Subsequent oxidations at C-10 by the cytochrome P450 monooxygenase FUM2, C-14 and C-15 by FUM6, FUM12 or FUM15, tricarballylic esterification of the hydroxyl groups on C-14 and C-15 by acyltransferase FUM14, and C-5 hydroxylation by 2-keto-glutarate-dependent dioxygenase FUM3 furnish the biosynthesis of fumonisins. The tricarballylic moieties are most likely derived from the citric acid cycle, and their addition to the carbon backbone may involve FUM7, FUM10, FUM11 and FUM14. The sequence is that of Cytochrome P450 monooxygenase FUM2 from Gibberella moniliformis (strain M3125 / FGSC 7600) (Maize ear and stalk rot fungus).